The chain runs to 362 residues: Lipoprotein p35 (362 aa).

The signal sequence occupies residues 1–30 (MKIKKIKLLKALALTGAFGIVATVPVIVSS). Cysteine 31 carries N-palmitoyl cysteine lipidation. Cysteine 31 carries the S-diacylglycerol cysteine lipid modification. The disordered stretch occupies residues 33-53 (STSENNGNGNGNGGTDGNTQQ).

Belongs to the p35 lipoprotein family. The N-terminus is blocked.

The protein localises to the cell membrane. Functionally, major M.penetrans antigen. In Malacoplasma penetrans (strain HF-2) (Mycoplasma penetrans), this protein is Lipoprotein p35.